A 345-amino-acid chain; its full sequence is 2-oxoglutarate-dependent ethylene/succinate-forming enzyme (345 aa).

The 122-residue stretch at glycine 167–proline 288 folds into the Fe2OG dioxygenase domain. 2 residues coordinate Fe cation: histidine 191 and histidine 270.

It belongs to the iron/ascorbate-dependent oxidoreductase family. Monomer. Fe(2+) is required as a cofactor.

The enzyme catalyses 2-oxoglutarate + O2 + 2 H(+) = ethene + 3 CO2 + H2O. The catalysed reaction is L-arginine + 2-oxoglutarate + O2 = guanidine + L-glutamate 5-semialdehyde + succinate + CO2. Its pathway is alkene biosynthesis; ethylene biosynthesis via 2-oxoglutarate. Simultaneously catalyzes two reactions, namely formation of ethylene and of succinate from 2-oxoglutarate. The chain is 2-oxoglutarate-dependent ethylene/succinate-forming enzyme (efe) from Ralstonia nicotianae (strain ATCC BAA-1114 / GMI1000) (Ralstonia solanacearum).